The chain runs to 589 residues: MAATCSLLASFLLCFALLSAVSFAADPFVSYDFRVSYLTASPLGVPQQVIAVNGQFPGPLLNATTNYNVVVNVFNHLDEPLLLTWPGIQMRRNSWQDGVLGTNCPIPPRWNFTYQFQVKDQIGSFFYSPSLNFQRASGGFGPIVINNRDIIPIPFPQPDGELIFIIGDWYTQDHKALRRALDSGKELGMPDGVLINGKGPYKYNSSVPDGIDYLTFHVEPGKTYRIRVHNVGISTSLNFRIQNHSLLLVETEGHYTSQANFTDFDVHVGQSYSFLVTMDQDATSDYYIVASARFVNETVWQRVTGVAILHYSNSKGPVSGPLPVPKTDVSSPWSAMSQPKTIRQNTSASGARPNPQGSFHYGQINITNTYILRSLPPTIINGALRATLNGISFVNPSTPVRLADRNKVKGAYKLDFPDRPFNRPLRLDRSMINATYKGFIQVVFQNNDTKIQSFHVDGYSFFVVGMDFGIWSEDKKGSYNNWDAISRSTIEVYPGGWTAVLISLDNVGVWNIRVENLDRWYLGEETYMRITNPEEDGKTEMDPPDNVLYCGALKNLQKEQHHSAATSILNGHLKLMLLMVLLASVFRFC.

A signal peptide spans Met1–Ala24. Residues Asn62, Asn111, Asn204, Asn243, Asn260, Asn296, Asn345, Asn365, Asn433, and Asn447 are each glycosylated (N-linked (GlcNAc...) asparagine). Residues Leu322–Gln356 form a disordered region. Residues Asp328–Ser349 are compositionally biased toward polar residues. Cu cation is bound at residue His455. Ser563 is lipidated: GPI-anchor amidated serine. A propeptide spans Ala564 to Cys589 (removed in mature form).

It belongs to the multicopper oxidase family. Cu cation is required as a cofactor.

It localises to the cell membrane. This Arabidopsis thaliana (Mouse-ear cress) protein is Monocopper oxidase-like protein SKS1 (SKS1).